The primary structure comprises 78 residues: Acyl carrier protein (78 aa).

The Carrier domain maps to 2–77 (SDTVERVKKI…DAVKFIDKAS (76 aa)). Position 37 is an O-(pantetheine 4'-phosphoryl)serine (S37).

The protein belongs to the acyl carrier protein (ACP) family. Post-translationally, 4'-phosphopantetheine is transferred from CoA to a specific serine of apo-ACP by AcpS. This modification is essential for activity because fatty acids are bound in thioester linkage to the sulfhydryl of the prosthetic group.

It localises to the cytoplasm. Its pathway is lipid metabolism; fatty acid biosynthesis. In terms of biological role, carrier of the growing fatty acid chain in fatty acid biosynthesis. The sequence is that of Acyl carrier protein from Bartonella henselae (strain ATCC 49882 / DSM 28221 / CCUG 30454 / Houston 1) (Rochalimaea henselae).